The primary structure comprises 769 residues: Major inner protein P1 (769 aa).

In terms of assembly, homodimer. Associates with the polymerase complex.

The protein localises to the virion. In terms of biological role, P1 is the major inner capsid (core) protein of the polyhedral procapsid, which is responsible for genomic replication and transcription. Forms a dodecahedral shell from 60 asymmetric dimers. Binds to RNA and may be involved in genomic packaging. This chain is Major inner protein P1 (P1), found in Pseudomonas phage phi6 (Bacteriophage phi-6).